Reading from the N-terminus, the 227-residue chain is Cytidylate kinase (227 aa).

12-20 (GPSGAGKGT) serves as a coordination point for ATP.

This sequence belongs to the cytidylate kinase family. Type 1 subfamily.

It localises to the cytoplasm. The enzyme catalyses CMP + ATP = CDP + ADP. It carries out the reaction dCMP + ATP = dCDP + ADP. This is Cytidylate kinase from Xanthomonas oryzae pv. oryzae (strain PXO99A).